We begin with the raw amino-acid sequence, 246 residues long: Non-structural protein ORF4b (246 aa).

Residues 1–28 (MEESLMDVPSTSGTQVYSRKARKRSHSP) form a disordered region. Positions 19–28 (RKARKRSHSP) are enriched in basic residues. The short motif at 22-38 (RKRSHSPTKKLRYVKRR) is the Nuclear localization motif element.

As to quaternary structure, interacts with host KPNA4; this interaction inhibits the nuclear import of NF-kappa-B complex.

It localises to the host nucleus. The protein resides in the host nucleolus. Its subcellular location is the host cytoplasm. Its function is as follows. Plays a role in the inhibition of host innate immunity by inhibiting the interaction between host IKBKE and MAVS. In turn, this inhibition prevents the production of host interferon beta. Additionally, inhibits host NF-kappa-B by interacting with host KPNA4 and thereby preventing the translocation of the NF-kappa-B complex into the nucleus by this importin. The protein is Non-structural protein ORF4b (ORF4b) of Camelus dromedarius (Dromedary).